The following is a 158-amino-acid chain: Arginine repressor (158 aa).

It belongs to the ArgR family.

Its subcellular location is the cytoplasm. It participates in amino-acid biosynthesis; L-arginine biosynthesis [regulation]. Functionally, regulates arginine biosynthesis genes. The chain is Arginine repressor from Phocaeicola vulgatus (strain ATCC 8482 / DSM 1447 / JCM 5826 / CCUG 4940 / NBRC 14291 / NCTC 11154) (Bacteroides vulgatus).